We begin with the raw amino-acid sequence, 461 residues long: Bifunctional protein GlmU (461 aa).

The segment at 1 to 230 (MSKIHAVVLA…PEETLGVNDR (230 aa)) is pyrophosphorylase. UDP-N-acetyl-alpha-D-glucosamine-binding positions include 9-12 (LAAG), K23, Q73, 78-79 (GT), 101-103 (YGD), G140, E155, N170, and N228. D103 contributes to the Mg(2+) binding site. A Mg(2+)-binding site is contributed by N228. Positions 231-251 (VQLSEAEAYMKKRIMTGHMRN) are linker. The N-acetyltransferase stretch occupies residues 252–461 (GVTIIDPTST…KMPRKGKKQS (210 aa)). Positions 333 and 351 each coordinate UDP-N-acetyl-alpha-D-glucosamine. H363 (proton acceptor) is an active-site residue. 2 residues coordinate UDP-N-acetyl-alpha-D-glucosamine: Y366 and N377. Acetyl-CoA-binding positions include 386–387 (NY), A423, and R440.

In the N-terminal section; belongs to the N-acetylglucosamine-1-phosphate uridyltransferase family. This sequence in the C-terminal section; belongs to the transferase hexapeptide repeat family. Homotrimer. The cofactor is Mg(2+).

It localises to the cytoplasm. It carries out the reaction alpha-D-glucosamine 1-phosphate + acetyl-CoA = N-acetyl-alpha-D-glucosamine 1-phosphate + CoA + H(+). The catalysed reaction is N-acetyl-alpha-D-glucosamine 1-phosphate + UTP + H(+) = UDP-N-acetyl-alpha-D-glucosamine + diphosphate. It functions in the pathway nucleotide-sugar biosynthesis; UDP-N-acetyl-alpha-D-glucosamine biosynthesis; N-acetyl-alpha-D-glucosamine 1-phosphate from alpha-D-glucosamine 6-phosphate (route II): step 2/2. It participates in nucleotide-sugar biosynthesis; UDP-N-acetyl-alpha-D-glucosamine biosynthesis; UDP-N-acetyl-alpha-D-glucosamine from N-acetyl-alpha-D-glucosamine 1-phosphate: step 1/1. Its pathway is bacterial outer membrane biogenesis; LPS lipid A biosynthesis. Catalyzes the last two sequential reactions in the de novo biosynthetic pathway for UDP-N-acetylglucosamine (UDP-GlcNAc). The C-terminal domain catalyzes the transfer of acetyl group from acetyl coenzyme A to glucosamine-1-phosphate (GlcN-1-P) to produce N-acetylglucosamine-1-phosphate (GlcNAc-1-P), which is converted into UDP-GlcNAc by the transfer of uridine 5-monophosphate (from uridine 5-triphosphate), a reaction catalyzed by the N-terminal domain. This Brevibacillus brevis (strain 47 / JCM 6285 / NBRC 100599) protein is Bifunctional protein GlmU.